The chain runs to 337 residues: D-alanine--D-alanine ligase (337 aa).

The region spanning 124–330 (KMWFSALGIP…FTEYLSLVIN (207 aa)) is the ATP-grasp domain. 154 to 209 (ALAQWGSIFVKAASQGSSVGCYKVDDSDKVAGVLKDAFGYAPYVIVEKTIKARELE) contributes to the ATP binding site. Positions 284, 297, and 299 each coordinate Mg(2+).

Belongs to the D-alanine--D-alanine ligase family. Mg(2+) serves as cofactor. Requires Mn(2+) as cofactor.

The protein localises to the cytoplasm. The catalysed reaction is 2 D-alanine + ATP = D-alanyl-D-alanine + ADP + phosphate + H(+). It functions in the pathway cell wall biogenesis; peptidoglycan biosynthesis. Functionally, cell wall formation. This chain is D-alanine--D-alanine ligase, found in Shewanella baltica (strain OS195).